We begin with the raw amino-acid sequence, 733 residues long: Hypermethylated in cancer 1 protein (733 aa).

Residues 47 to 110 (CDVIIVVQNA…IYTGRLADGA (64 aa)) form the BTB domain. The mediates HDAC-dependent transcriptional repression stretch occupies residues 154 to 315 (KYCHLRGGGG…PFRGGSGSPG (162 aa)). At arginine 159 the chain carries Omega-N-methylarginine. The segment at 189–209 (YPSPVGPPPPPAAEPPSGPEA) is disordered. A compositionally biased stretch (pro residues) spans 192 to 206 (PVGPPPPPAAEPPSG). A Phosphoserine modification is found at serine 237. An interaction with CTBP1 region spans residues 241-247 (GLDLSKK). Residues 241-421 (GLDLSKKSPP…PGGHLEGYPC (181 aa)) form a disordered region. Serine 248 carries the phosphoserine modification. Pro residues predominate over residues 284 to 293 (LALPSLPPLP). Lysine 333 is modified (N6-acetyllysine; alternate). Residue lysine 333 forms a Glycyl lysine isopeptide (Lys-Gly) (interchain with G-Cter in SUMO); alternate linkage. The span at 344 to 361 (ELGRERGSPSERCEERGG) shows a compositional bias: basic and acidic residues. The residue at position 366 (serine 366) is a Phosphoserine. The span at 368–380 (GGPPLGLAPPPRY) shows a compositional bias: pro residues. C2H2-type zinc fingers lie at residues 439–459 (CIPC…VEAH), 509–529 (CASC…EKTH), 537–557 (CTIC…MRSH), 565–585 (CDAC…MRIH), and 593–613 (CQVC…MKMH). A Phosphoserine modification is found at serine 704.

This sequence belongs to the krueppel C2H2-type zinc-finger protein family. Hic subfamily. As to quaternary structure, self-associates. Interacts with HIC2. Interacts with CTBP1 and CTBP2. Interacts with TCF7L2 and ARID1A. Interacts with MTA1 and MBD3; indicative for an association with the NuRD complex. Interacts with SIRT1. In terms of processing, acetylated on several residues, including Lys-333. Lys-333 is deacetylated by SIRT1. Post-translationally, sumoylated on Lys-333 by a PIAS family member, which enhances interaction with MTA1, positively regulates transcriptional repression activity and is enhanced by HDAC4. As to expression, ubiquitously expressed with highest levels found in lung, colon, prostate, thymus, testis and ovary. Expression is absent or decreased in many tumor cells.

It is found in the nucleus. Functionally, transcriptional repressor. Recognizes and binds to the consensus sequence '5-[CG]NG[CG]GGGCA[CA]CC-3'. May act as a tumor suppressor. Involved in development of head, face, limbs and ventral body wall. Involved in down-regulation of SIRT1 and thereby is involved in regulation of p53/TP53-dependent apoptotic DNA-damage responses. The specific target gene promoter association seems to be depend on corepressors, such as CTBP1 or CTBP2 and MTA1. In cooperation with MTA1 (indicative for an association with the NuRD complex) represses transcription from CCND1/cyclin-D1 and CDKN1C/p57Kip2 specifically in quiescent cells. Involved in regulation of the Wnt signaling pathway probably by association with TCF7L2 and preventing TCF7L2 and CTNNB1 association with promoters of TCF-responsive genes. Seems to repress transcription from E2F1 and ATOH1 which involves ARID1A, indicative for the participation of a distinct SWI/SNF-type chromatin-remodeling complex. Probably represses transcription of ACKR3, FGFBP1 and EFNA1. In Homo sapiens (Human), this protein is Hypermethylated in cancer 1 protein (HIC1).